The primary structure comprises 418 residues: Histidinol dehydrogenase (418 aa).

NAD(+)-binding residues include Tyr-119, Gln-180, and Asn-203. Substrate is bound by residues Thr-226, Gln-248, and His-251. Positions 248 and 251 each coordinate Zn(2+). Active-site proton acceptor residues include Glu-316 and His-317. 4 residues coordinate substrate: His-317, Asp-350, Glu-404, and His-409. Asp-350 serves as a coordination point for Zn(2+). Residue His-409 coordinates Zn(2+).

It belongs to the histidinol dehydrogenase family. The cofactor is Zn(2+).

The catalysed reaction is L-histidinol + 2 NAD(+) + H2O = L-histidine + 2 NADH + 3 H(+). It participates in amino-acid biosynthesis; L-histidine biosynthesis; L-histidine from 5-phospho-alpha-D-ribose 1-diphosphate: step 9/9. Its function is as follows. Catalyzes the sequential NAD-dependent oxidations of L-histidinol to L-histidinaldehyde and then to L-histidine. This is Histidinol dehydrogenase from Staphylococcus aureus (strain MSSA476).